A 159-amino-acid polypeptide reads, in one-letter code: Ribosomal RNA large subunit methyltransferase H (159 aa).

Residues Leu76, Gly108, and 127–132 each bind S-adenosyl-L-methionine; that span reads FSKMTF.

It belongs to the RNA methyltransferase RlmH family. As to quaternary structure, homodimer.

The protein resides in the cytoplasm. The enzyme catalyses pseudouridine(1915) in 23S rRNA + S-adenosyl-L-methionine = N(3)-methylpseudouridine(1915) in 23S rRNA + S-adenosyl-L-homocysteine + H(+). Specifically methylates the pseudouridine at position 1915 (m3Psi1915) in 23S rRNA. The protein is Ribosomal RNA large subunit methyltransferase H of Staphylococcus haemolyticus (strain JCSC1435).